A 342-amino-acid chain; its full sequence is (+)-pulegone reductase (342 aa).

Residues 163 to 166 (GSVG), K189, Y205, N229, 251 to 257 (CGMVSQY), 281 to 283 (FVV), and N331 each bind NADP(+).

The protein belongs to the NADP-dependent oxidoreductase L4BD family.

It localises to the cytoplasm. It catalyses the reaction (2R,5R)-isomenthone + NADP(+) = (R)-pulegone + NADPH + H(+). The enzyme catalyses (1R,4S)-menthone + NADP(+) = (R)-pulegone + NADPH + H(+). It functions in the pathway secondary metabolite biosynthesis; terpenoid biosynthesis. Its activity is regulated as follows. Not inhibited by (+)-menthofuran. Functionally, monoterpene synthase that catalyzes the specific reduction of the 4,8-double bond of (+)-pulegone to produce both (-)-menthone and (+)-isomenthone in a 70:30 ratio. Unable to utilize either (-)-isopiperitenone or (+)-cis-isopulegone, or to catalyze the reverse reaction with (-)-menthone or (+)-isomenthone. Has an absolute requirement for NADPH. This chain is (+)-pulegone reductase, found in Mentha piperita (Peppermint).